Here is a 265-residue protein sequence, read N- to C-terminus: HTH-type transcriptional activator CfaD (265 aa).

The HTH araC/xylS-type domain maps to 164–261; that stretch reads DKVRNVIEKD…GVTPKQFFTY (98 aa). 2 consecutive DNA-binding regions (H-T-H motif) follow at residues 181-202 and 228-251; these read GIIA…ESEN and ISQI…NKHY.

As to quaternary structure, homodimer.

In terms of biological role, transcriptional activator of the CFA/I adhesin (cfaA and cfaB) genes of enterotoxigenic E.coli at 37 degrees Celsius. Also represses the silencing effect of H-NS (hns). This Escherichia coli protein is HTH-type transcriptional activator CfaD.